Consider the following 729-residue polypeptide: Phosphoribosylformylglycinamidine synthase subunit PurL (729 aa).

Residue His-54 is part of the active site. 2 residues coordinate ATP: Tyr-57 and Lys-96. Mg(2+) is bound at residue Glu-98. Residues 99–102 (SHNH) and Arg-121 contribute to the substrate site. His-100 functions as the Proton acceptor in the catalytic mechanism. Asp-122 contributes to the Mg(2+) binding site. Residue Gln-245 coordinates substrate. Asp-273 lines the Mg(2+) pocket. 317–319 (ETQ) is a substrate binding site. 2 residues coordinate ATP: Asp-495 and Gly-532. Position 533 (Asn-533) interacts with Mg(2+). A substrate-binding site is contributed by Ser-535.

Belongs to the FGAMS family. As to quaternary structure, monomer. Part of the FGAM synthase complex composed of 1 PurL, 1 PurQ and 2 PurS subunits.

It is found in the cytoplasm. The enzyme catalyses N(2)-formyl-N(1)-(5-phospho-beta-D-ribosyl)glycinamide + L-glutamine + ATP + H2O = 2-formamido-N(1)-(5-O-phospho-beta-D-ribosyl)acetamidine + L-glutamate + ADP + phosphate + H(+). It functions in the pathway purine metabolism; IMP biosynthesis via de novo pathway; 5-amino-1-(5-phospho-D-ribosyl)imidazole from N(2)-formyl-N(1)-(5-phospho-D-ribosyl)glycinamide: step 1/2. In terms of biological role, part of the phosphoribosylformylglycinamidine synthase complex involved in the purines biosynthetic pathway. Catalyzes the ATP-dependent conversion of formylglycinamide ribonucleotide (FGAR) and glutamine to yield formylglycinamidine ribonucleotide (FGAM) and glutamate. The FGAM synthase complex is composed of three subunits. PurQ produces an ammonia molecule by converting glutamine to glutamate. PurL transfers the ammonia molecule to FGAR to form FGAM in an ATP-dependent manner. PurS interacts with PurQ and PurL and is thought to assist in the transfer of the ammonia molecule from PurQ to PurL. The polypeptide is Phosphoribosylformylglycinamidine synthase subunit PurL (Staphylococcus aureus (strain Mu3 / ATCC 700698)).